The sequence spans 275 residues: Large ribosomal subunit protein uL2 (275 aa).

2 disordered regions span residues 1–55 (MGIR…RHRG) and 218–275 (PHVR…RRRR). Positions 259–275 (TRNKKKASSRLIVRRRR) are enriched in basic residues.

The protein belongs to the universal ribosomal protein uL2 family. In terms of assembly, part of the 50S ribosomal subunit. Forms a bridge to the 30S subunit in the 70S ribosome.

In terms of biological role, one of the primary rRNA binding proteins. Required for association of the 30S and 50S subunits to form the 70S ribosome, for tRNA binding and peptide bond formation. It has been suggested to have peptidyltransferase activity; this is somewhat controversial. Makes several contacts with the 16S rRNA in the 70S ribosome. The protein is Large ribosomal subunit protein uL2 of Crocosphaera subtropica (strain ATCC 51142 / BH68) (Cyanothece sp. (strain ATCC 51142)).